An 873-amino-acid chain; its full sequence is Probable beta-glucosidase A (873 aa).

The signal sequence occupies residues 1-19 (MRFGWLEVAALTAASVANA). Residues Asn71, Asn222, and Asn263 are each glycosylated (N-linked (GlcNAc...) asparagine). Residue Asp291 is part of the active site. Asn326, Asn333, Asn365, Asn453, Asn534, Asn553, Asn575, Asn679, and Asn725 each carry an N-linked (GlcNAc...) asparagine glycan. Residues 730-765 (EDSSDDPNYGWEDSEYIPEGARDGSPQPLLKAGGAP) are disordered.

It belongs to the glycosyl hydrolase 3 family.

The protein localises to the secreted. The enzyme catalyses Hydrolysis of terminal, non-reducing beta-D-glucosyl residues with release of beta-D-glucose.. The protein operates within glycan metabolism; cellulose degradation. Beta-glucosidases are one of a number of cellulolytic enzymes involved in the degradation of cellulosic biomass. Catalyzes the last step releasing glucose from the inhibitory cellobiose. The polypeptide is Probable beta-glucosidase A (bglA) (Neosartorya fischeri (strain ATCC 1020 / DSM 3700 / CBS 544.65 / FGSC A1164 / JCM 1740 / NRRL 181 / WB 181) (Aspergillus fischerianus)).